The sequence spans 1285 residues: Peroxidasin homolog pxn-1 (1285 aa).

Positions 1-20 are cleaved as a signal peptide; that stretch reads MNLYLLLLVIATSSWQFVAG. Residues 21 to 53 enclose the LRRNT domain; it reads LECPVECTCDKKGLVVDCSSSGLTRIPKNISRN. LRR repeat units lie at residues 27 to 49, 50 to 72, 73 to 96, 97 to 120, 122 to 143, 145 to 168, and 204 to 227; these read CTCD…IPKN, ISRN…RSDL, EGFN…ENVL, DHLP…PLCS, SRPL…EQVL, YFPD…KLFD, and KVYC…SALT. N49 carries N-linked (GlcNAc...) asparagine glycosylation. The 49-residue stretch at 180–228 folds into the LRRCT domain; it reads SNPWHCDCRASKVKALLQKVKWEKKVYCTNPVELRHQALDEVDDSALTC. Residue N248 is glycosylated (N-linked (GlcNAc...) asparagine). The segment at 305-324 is disordered; that stretch reads RQSQHQGNGSPQFTYKPRDN. Positions 307 to 317 are enriched in polar residues; sequence SQHQGNGSPQF. Ig-like C2-type domains lie at 315 to 401 and 408 to 495; these read PQFT…FSLD and PNIY…AKLT. 2 cysteine pairs are disulfide-bonded: C336-C385 and C429-C479. A coiled-coil region spans residues 508 to 550; that stretch reads QIDEELLRAIAQKARQNVENAVEKTRKQLTQDKVTNTNDLKRL. N595 is a glycosylation site (N-linked (GlcNAc...) asparagine). Cysteines 625 and 641 form a disulfide. D719 provides a ligand contact to heme b. Catalysis depends on H720, which acts as the Proton acceptor. D721 provides a ligand contact to Ca(2+). 2 disulfides stabilise this stretch: C740–C750 and C744–C771. N-linked (GlcNAc...) asparagine glycosylation occurs at N741. The Ca(2+) site is built by T803, F805, D807, and S809. Residue N858 is glycosylated (N-linked (GlcNAc...) asparagine). 2 residues coordinate heme b: E877 and H973. LRR repeat units lie at residues 998–1022 and 1049–1073; these read HKAF…GLFA and VSLD…TEYR. Disulfide bonds link C1076/C1133 and C1174/C1201. One copy of the LRR 12 repeat lies at 1168-1189; sequence TLARLFCDNGDNIDRIQKDVFM.

This sequence belongs to the peroxidase family. XPO subfamily. It depends on Ca(2+) as a cofactor. Requires heme b as cofactor. Expressed in the ventral nerve cord, the dorsal nerve cord, head neurons, GABAergic and cholinergic neurons, body wall muscles, vulval muscles, uterine muscles, intestine, the hypodermis and in coelomocytes.

It is found in the secreted. The protein localises to the extracellular space. The protein resides in the extracellular matrix. It catalyses the reaction L-lysyl-[collagen] + L-methionyl-[collagen] + H2O2 = [collagen]-L-lysyl-N-S-L-methionyl-[collagen] + 2 H2O + H(+). The enzyme catalyses bromide + H2O2 = hypobromite + H2O. The catalysed reaction is L-lysyl-[collagen] + L-methionyl-[collagen] + hypobromite = [collagen]-L-lysyl-N-S-L-methionyl-[collagen] + bromide + H2O + H(+). It carries out the reaction L-tyrosyl-[protein] + bromide + H2O2 + H(+) = 3-bromo-L-tyrosyl-[protein] + 2 H2O. It catalyses the reaction hypobromite + L-tyrosyl-[protein] + H(+) = 3-bromo-L-tyrosyl-[protein] + H2O. Its function is as follows. Catalyzes the two-electron oxidation of bromide by hydrogen peroxide and generates hypobromite as a reactive intermediate which mediates the formation of sulfilimine cross-links between methionine and hydroxylysine residues within an uncross-linked collagen IV NC1 hexamer. Plays a role in the attachment of tissues and in axonal guidance during early developmental stages. May functionally antagonize the peroxidasin pxn-2 to maintain neuronal development. This is Peroxidasin homolog pxn-1 from Caenorhabditis elegans.